The primary structure comprises 302 residues: Arginase (302 aa).

Mn(2+) is bound by residues His-103, Asp-126, His-128, and Asp-130. Substrate contacts are provided by residues 128–132, 139–141, and Asp-180; these read HGDLN and SGN. Mn(2+)-binding residues include Asp-229 and Asp-231. Substrate contacts are provided by Thr-243 and Glu-274.

It belongs to the arginase family. Mn(2+) is required as a cofactor.

The enzyme catalyses L-arginine + H2O = urea + L-ornithine. The protein operates within nitrogen metabolism; urea cycle; L-ornithine and urea from L-arginine: step 1/1. The polypeptide is Arginase (arg) (Staphylococcus aureus (strain COL)).